The sequence spans 173 residues: Transcription factor E (173 aa).

Residues 3 to 86 (DDPLVKSLLT…SWKFEEQEVI (84 aa)) form the HTH TFE/IIEalpha-type domain.

It belongs to the TFE family. As to quaternary structure, monomer. Interaction with RNA polymerase subunits RpoF and RpoE is necessary for Tfe stimulatory transcription activity. Able to interact with Tbp and RNA polymerase in the absence of DNA promoter. Interacts both with the preinitiation and elongation complexes.

Its function is as follows. Transcription factor that plays a role in the activation of archaeal genes transcribed by RNA polymerase. Facilitates transcription initiation by enhancing TATA-box recognition by TATA-box-binding protein (Tbp), and transcription factor B (Tfb) and RNA polymerase recruitment. Not absolutely required for transcription in vitro, but particularly important in cases where Tbp or Tfb function is not optimal. It dynamically alters the nucleic acid-binding properties of RNA polymerases by stabilizing the initiation complex and destabilizing elongation complexes. Seems to translocate with the RNA polymerase following initiation and acts by binding to the non template strand of the transcription bubble in elongation complexes. The polypeptide is Transcription factor E (Methanobrevibacter smithii (strain ATCC 35061 / DSM 861 / OCM 144 / PS)).